Reading from the N-terminus, the 523-residue chain is ATP synthase subunit beta, mitochondrial (523 aa).

Residues 1-19 (MFSRVAKTSFSAVRAAKSQ) constitute a mitochondrion transit peptide. 201–208 (GGAGVGKT) is a binding site for ATP.

The protein belongs to the ATPase alpha/beta chains family. As to quaternary structure, F-type ATPases have 2 components, CF(1) - the catalytic core - and CF(0) - the membrane proton channel. CF(1) has five subunits: alpha(3), beta(3), gamma(1), delta(1), epsilon(1). CF(0) has three main subunits: a, b and c.

It is found in the mitochondrion. It localises to the mitochondrion inner membrane. The enzyme catalyses ATP + H2O + 4 H(+)(in) = ADP + phosphate + 5 H(+)(out). Mitochondrial membrane ATP synthase (F(1)F(0) ATP synthase or Complex V) produces ATP from ADP in the presence of a proton gradient across the membrane which is generated by electron transport complexes of the respiratory chain. F-type ATPases consist of two structural domains, F(1) - containing the extramembraneous catalytic core, and F(0) - containing the membrane proton channel, linked together by a central stalk and a peripheral stalk. During catalysis, ATP synthesis in the catalytic domain of F(1) is coupled via a rotary mechanism of the central stalk subunits to proton translocation. Subunits alpha and beta form the catalytic core in F(1). Rotation of the central stalk against the surrounding alpha(3)beta(3) subunits leads to hydrolysis of ATP in three separate catalytic sites on the beta subunits. This chain is ATP synthase subunit beta, mitochondrial, found in Hemicentrotus pulcherrimus (Sea urchin).